Consider the following 651-residue polypeptide: MNPSTPSLLYTSIFFYFTIIATQTLSLDPKFKACEPKSCGKGPQISYPFYLSGKQESFCGYPSFELTCDDEEKLPVLGISGEEYVIKNISYLTQSFQVVNSKASHDPCPRPLNNLTLHRTPFFVNPSHINFTILYNCSDHLLEDFRTYPLTCARNTSLLRSFGVFDRKKLGKEKQIASMSCQKLVDVPVLASNESDVMGMTYVEILKRGFVLNWTANSCFRCITSGGRCGTDQQEFVCLCPDGPKLHDTCTNGKNDKRRRVIVKVLIGASAAVVGLIAASIFWYVYHRRKTKSYRNSSALLPRNISSDPSAKSFDIEKAEELLVGVHIFSYEELEEATNNFDPSKELGDGGFGTVYYGKLKDGRSVAVKRLYDNNFKRAEQFRNEVEILTGLRHPNLVALFGCSSKQSRDLLLVYEYVANGTLADHLHGPQANPSSLPWSIRLKIAVETASALKYLHASKIIHRDVKSNNILLDQNFNVKVADFGLSRLFPMDKTHVSTAPQGTPGYVDPDYHLCYQLSNKSDVYSFAVVLMELISSLPAVDITRPRQEINLSNMAVVKIQNHELRDMVDPSLGFDTDTRVRQTVIAVAELAFQCLQSDKDLRPCMSHVQDTLTRIQNNGFGSEMDVVDVNKSGPLVAQSPDSVIVKWDSK.

The first 26 residues, 1–26 (MNPSTPSLLYTSIFFYFTIIATQTLS), serve as a signal peptide directing secretion. Topologically, residues 27–264 (LDPKFKACEP…NDKRRRVIVK (238 aa)) are extracellular. 7 N-linked (GlcNAc...) asparagine glycosylation sites follow: Asn-88, Asn-114, Asn-130, Asn-136, Asn-155, Asn-193, and Asn-213. A helical transmembrane segment spans residues 265–285 (VLIGASAAVVGLIAASIFWYV). At 286–651 (YHRRKTKSYR…DSVIVKWDSK (366 aa)) the chain is on the cytoplasmic side. One can recognise a Protein kinase domain in the interval 341 to 613 (FDPSKELGDG…PCMSHVQDTL (273 aa)). Residues 347–355 (LGDGGFGTV) and Lys-369 each bind ATP. Phosphotyrosine is present on Tyr-415. Asp-465 functions as the Proton acceptor in the catalytic mechanism. At Ser-498 the chain carries Phosphoserine. Thr-499 and Thr-504 each carry phosphothreonine. A Phosphotyrosine modification is found at Tyr-512.

The protein belongs to the protein kinase superfamily. Ser/Thr protein kinase family.

It is found in the cell membrane. The protein localises to the membrane. It catalyses the reaction L-seryl-[protein] + ATP = O-phospho-L-seryl-[protein] + ADP + H(+). The enzyme catalyses L-threonyl-[protein] + ATP = O-phospho-L-threonyl-[protein] + ADP + H(+). Functionally, probable receptor-like serine/threonine-protein kinase involved in abscisic acid (ABA) signaling. Acts as a positive regulator of abiotic stress response. The sequence is that of LEAF RUST 10 DISEASE-RESISTANCE LOCUS RECEPTOR-LIKE PROTEIN KINASE-like 1.2 from Arabidopsis thaliana (Mouse-ear cress).